The chain runs to 184 residues: Cytochrome c homolog (184 aa).

The Cytoplasmic segment spans residues 1-10 (MDSFELNKIL). A helical; Signal-anchor membrane pass occupies residues 11-31 (GAVLGTCLILLVTSFTANALF). The Periplasmic portion of the chain corresponds to 32-184 (SPKMPEKPGF…HPKPLPTASK (153 aa)). Cys-84, Cys-87, His-88, and Met-151 together coordinate heme c.

It belongs to the cytochrome c family. Binds 1 heme c group covalently per subunit.

The protein localises to the cell membrane. Functionally, may be involved in electron transfer from bc1 complex to aa3. This Bradyrhizobium diazoefficiens (strain JCM 10833 / BCRC 13528 / IAM 13628 / NBRC 14792 / USDA 110) protein is Cytochrome c homolog (cycM).